The chain runs to 2073 residues: Fatty acid synthase subunit beta (2073 aa).

The interval 1 to 459 is acetyltransferase; the sequence is MVEAEQVHQS…VYSTDDAGDL (459 aa). Residue Ser270 is the For acetyltransferase activity of the active site. The tract at residues 470 to 858 is enoyl reductase; the sequence is ALAVMITEKV…TRGIMFWKEL (389 aa). Residue Ser1122 is modified to Phosphoserine. Residues 1155-1644 are dehydratase; it reads GPEYTWFRAI…LPNTELITKL (490 aa). His1361 (for dehydratase activity) is an active-site residue. The 110-residue stretch at 1558 to 1667 folds into the MaoC-like domain; the sequence is PVFVTPPTNS…VEVLNQETSE (110 aa). Residues 1645–2073 form a malonyl/palmitoyl transferase region; the sequence is SHTGMINGRK…LQNWDEYESS (429 aa). Ser1828 acts as the For malonyltransferase activity in catalysis. At Ser2073 the chain carries Phosphoserine.

Belongs to the fungal fatty acid synthetase subunit beta family. [Alpha(6)beta(6)] hexamers of two multifunctional subunits (alpha and beta).

It carries out the reaction acetyl-CoA + n malonyl-CoA + 2n NADPH + 4n H(+) = a long-chain-acyl-CoA + n CoA + n CO2 + 2n NADP(+).. It catalyses the reaction holo-[ACP] + acetyl-CoA = acetyl-[ACP] + CoA. The catalysed reaction is holo-[ACP] + malonyl-CoA = malonyl-[ACP] + CoA. The enzyme catalyses a (3R)-hydroxyacyl-[ACP] = a (2E)-enoyl-[ACP] + H2O. It carries out the reaction a 2,3-saturated acyl-[ACP] + NAD(+) = a (2E)-enoyl-[ACP] + NADH + H(+). It catalyses the reaction (9Z)-octadecenoyl-[ACP] + H2O = (9Z)-octadecenoate + holo-[ACP] + H(+). Functionally, fatty acid synthetase catalyzes the formation of long-chain fatty acids from acetyl-CoA, malonyl-CoA and NADPH. The beta subunit contains domains for: [acyl-carrier-protein] acetyltransferase and malonyltransferase, S-acyl fatty acid synthase thioesterase, enoyl-[acyl-carrier-protein] reductase, and 3-hydroxypalmitoyl-[acyl-carrier-protein] dehydratase. In Schizosaccharomyces pombe (strain 972 / ATCC 24843) (Fission yeast), this protein is Fatty acid synthase subunit beta (fas1).